Here is a 107-residue protein sequence, read N- to C-terminus: Iron-binding protein IscA (107 aa).

Fe cation is bound by residues cysteine 35, cysteine 99, and cysteine 101.

It belongs to the HesB/IscA family. Homodimer; may form tetramers and higher multimers. Fe cation serves as cofactor.

Is able to transfer iron-sulfur clusters to apo-ferredoxin. Multiple cycles of [2Fe2S] cluster formation and transfer are observed, suggesting that IscA acts catalytically. Recruits intracellular free iron so as to provide iron for the assembly of transient iron-sulfur cluster in IscU in the presence of IscS, L-cysteine and the thioredoxin reductase system TrxA/TrxB. The chain is Iron-binding protein IscA from Serratia proteamaculans (strain 568).